Reading from the N-terminus, the 381-residue chain is tRNA (guanine(26)-N(2))-dimethyltransferase (381 aa).

A Trm1 methyltransferase domain is found at 6 to 378 (FEVHEGKAKV…APYEVFVEVM (373 aa)). S-adenosyl-L-methionine is bound by residues arginine 38, arginine 63, aspartate 80, aspartate 122, and alanine 123.

It belongs to the class I-like SAM-binding methyltransferase superfamily. Trm1 family. As to quaternary structure, monomer.

It carries out the reaction guanosine(26) in tRNA + 2 S-adenosyl-L-methionine = N(2)-dimethylguanosine(26) in tRNA + 2 S-adenosyl-L-homocysteine + 2 H(+). Its function is as follows. Dimethylates a single guanine residue at position 26 of a number of tRNAs using S-adenosyl-L-methionine as donor of the methyl groups. This is tRNA (guanine(26)-N(2))-dimethyltransferase from Pyrococcus furiosus (strain ATCC 43587 / DSM 3638 / JCM 8422 / Vc1).